The primary structure comprises 390 residues: Lipid-A-disaccharide synthase (390 aa).

This sequence belongs to the LpxB family.

It catalyses the reaction a lipid X + a UDP-2-N,3-O-bis[(3R)-3-hydroxyacyl]-alpha-D-glucosamine = a lipid A disaccharide + UDP + H(+). It functions in the pathway bacterial outer membrane biogenesis; LPS lipid A biosynthesis. Condensation of UDP-2,3-diacylglucosamine and 2,3-diacylglucosamine-1-phosphate to form lipid A disaccharide, a precursor of lipid A, a phosphorylated glycolipid that anchors the lipopolysaccharide to the outer membrane of the cell. The polypeptide is Lipid-A-disaccharide synthase (Haemophilus influenzae (strain PittGG)).